Consider the following 925-residue polypeptide: ETO1-like protein 2 (925 aa).

Residues 207-307 (SDISFCVGSE…ECEARLAASV (101 aa)) enclose the BTB domain. The TPR 1 repeat unit spans residues 409–442 (ALSLHQMGCVLFERKDYKAAQFHFRLASSLGHVY). A coiled-coil region spans residues 509–533 (KYRAVMKFEQKQIKEAFQEIDRLIQ). TPR repeat units lie at residues 538–571 (PECL…EPNY), 664–697 (AERL…QRSF), 738–771 (GQAL…KHIR), 773–803 (RQGL…SCSK), 834–867 (TYPY…RPEL), and 869–900 (TLHL…DPNH).

The protein belongs to the ETO1 family. In terms of assembly, interacts with the C-terminal domain of ACS5. Constitutively expressed in green and etiolated seedlings.

Its pathway is protein modification; protein ubiquitination. In terms of biological role, potential regulator of the ethylene pathway, which acts by regulating the stability of 1-aminocyclopropane-1-carboxylate synthase (ACS) enzymes. May act as a substrate-specific adapter that connects ACS enzymes, such as ACS5, to ubiquitin ligase complexes, leading to proteasomal degradation of ACS enzymes. The protein is ETO1-like protein 2 (EOL2) of Arabidopsis thaliana (Mouse-ear cress).